We begin with the raw amino-acid sequence, 256 residues long: Pimeloyl-[acyl-carrier protein] methyl ester esterase (256 aa).

The 228-residue stretch at 15–242 folds into the AB hydrolase-1 domain; the sequence is HLVLLHGWGL…AAHAPFISHP (228 aa). Residues Trp-22, 82-83, and 143-147 each bind substrate; these read SL and FLALQ. Ser-82 acts as the Nucleophile in catalysis. Catalysis depends on residues Asp-207 and His-235. His-235 provides a ligand contact to substrate.

It belongs to the AB hydrolase superfamily. Carboxylesterase BioH family. As to quaternary structure, monomer.

Its subcellular location is the cytoplasm. It carries out the reaction 6-carboxyhexanoyl-[ACP] methyl ester + H2O = 6-carboxyhexanoyl-[ACP] + methanol + H(+). It functions in the pathway cofactor biosynthesis; biotin biosynthesis. Its function is as follows. The physiological role of BioH is to remove the methyl group introduced by BioC when the pimeloyl moiety is complete. It allows to synthesize pimeloyl-ACP via the fatty acid synthetic pathway through the hydrolysis of the ester bonds of pimeloyl-ACP esters. The chain is Pimeloyl-[acyl-carrier protein] methyl ester esterase from Escherichia coli O6:K15:H31 (strain 536 / UPEC).